A 76-amino-acid polypeptide reads, in one-letter code: MKLLLLLLTVTLLLAQVTPVTKCWGKSGRCRTTCKKSEVYYILCKTEAKCCVDPKYVPVRSKLTDTNTSLESTSAV.

The N-terminal stretch at 1–15 (MKLLLLLLTVTLLLA) is a signal peptide. 3 disulfide bridges follow: Cys23-Cys50, Cys30-Cys44, and Cys34-Cys51.

The protein belongs to the beta-defensin family. As to expression, abundant expression in the male reproductive tract only.

It is found in the secreted. Its function is as follows. Has antibacterial activity. This chain is Beta-defensin 121 (DEFB121), found in Macaca mulatta (Rhesus macaque).